Reading from the N-terminus, the 295-residue chain is Acetylglutamate kinase (295 aa).

Residues 66–67, Arg88, and Asn193 each bind substrate; that span reads GG.

This sequence belongs to the acetylglutamate kinase family. ArgB subfamily.

It localises to the cytoplasm. The catalysed reaction is N-acetyl-L-glutamate + ATP = N-acetyl-L-glutamyl 5-phosphate + ADP. The protein operates within amino-acid biosynthesis; L-arginine biosynthesis; N(2)-acetyl-L-ornithine from L-glutamate: step 2/4. Its function is as follows. Catalyzes the ATP-dependent phosphorylation of N-acetyl-L-glutamate. This is Acetylglutamate kinase from Sinorhizobium medicae (strain WSM419) (Ensifer medicae).